The chain runs to 259 residues: Ras-related protein Rab-34 (259 aa).

Met1 bears the N-acetylmethionine mark. Residues Ser62, Val63, Gly64, Lys65, Thr66, Asp78, Tyr81, and Thr84 each coordinate GTP. Residue Thr66 coordinates Mg(2+). Positions 71–89 (RFCKDTFDKNYKATIGVDF) match the Switch 1 motif. Residues Thr84 and Asp107 each coordinate Mg(2+). The Switch 2 motif lies at 108–127 (TAGQERFKCIASTYYRGAQA). Residues Gly110, Lys167, Asp169, and Ser198 each coordinate GTP. Ser241 and Ser244 each carry phosphoserine. S-geranylgeranyl cysteine attachment occurs at residues Cys257 and Cys258.

It belongs to the small GTPase superfamily. Rab family. Interacts with RILP. The GTP-bound form interacts with REP15. Mg(2+) serves as cofactor.

It localises to the cytoplasm. Its subcellular location is the golgi apparatus. The protein localises to the cytoplasmic vesicle. The protein resides in the phagosome. It is found in the phagosome membrane. It localises to the cell projection. Its subcellular location is the cilium. The protein localises to the cytoskeleton. The protein resides in the microtubule organizing center. It is found in the centrosome. It localises to the centriole. It carries out the reaction GTP + H2O = GDP + phosphate + H(+). Regulated by guanine nucleotide exchange factors (GEFs) which promote the exchange of bound GDP for free GTP. Regulated by GTPase activating proteins (GAPs) which increase the GTP hydrolysis activity. Inhibited by GDP dissociation inhibitors (GDIs). In terms of biological role, the small GTPases Rab are key regulators of intracellular membrane trafficking, from the formation of transport vesicles to their fusion with membranes. Rabs cycle between an inactive GDP-bound form and an active GTP-bound form that is able to recruit to membranes different sets of downstream effectors directly responsible for vesicle formation, movement, tethering and fusion. RAB34 transports protein involved in the redistribution of lysosomes to the peri-Golgi region. Plays a role in the maturation of phagosomes that engulf pathogens, such as S.aureus and M.tuberculosis. Plays a role in the fusion of phagosomes with lysosomes. Required for the early steps of intracellular ciliogenesis, the cilium assembly pathway initiated by trafficking and docking of ciliary vesicles to the centrioles in the cytoplasm, followed by axoneme formation in the cytoplasm. After axoneme elongation, the centrioles migrate close to the cell surface so that ciliary vesicles can fuse with the plasma membrane to expose cilia to the extracellular space. It seems dispensable for ciliogenesis via the extracellular pathway where cilium assembly begins after migration and docking of the centriole to the plasma membrane. Also acts as a positive regulator of hedgehog signaling and regulates ciliary function. This chain is Ras-related protein Rab-34 (RAB34), found in Sus scrofa (Pig).